We begin with the raw amino-acid sequence, 372 residues long: Tribbles homolog 1 (372 aa).

Disordered stretches follow at residues 1–26 and 49–85; these read MRVGPVRFALSGASQPRGPGLLFPAA and RLSECSSPPDYLSPPGSPCSPQPPPSTQGTGGSCVSS. The span at 59-74 shows a compositional bias: pro residues; it reads YLSPPGSPCSPQPPPS. The region spanning 91–338 is the Protein kinase domain; the sequence is IADYLLLPLA…APQILLHPWF (248 aa). Positions 355-360 match the COP1-binding motif; the sequence is DQIVPE.

Belongs to the protein kinase superfamily. CAMK Ser/Thr protein kinase family. Tribbles subfamily. In terms of assembly, monomer. Interacts (via protein kinase domain) with CEBPA. Interacts with COP1.

Its function is as follows. Adapter protein involved in protein degradation by interacting with COP1 ubiquitin ligase. Promotes CEBPA degradation and inhibits its function. Controls macrophage, eosinophil and neutrophil differentiation via the COP1-binding domain. Regulates myeloid cell differentiation by altering the expression of CEBPA in a COP1-dependent manner. Interacts with MAPK kinases and regulates activation of MAP kinases, but has no kinase activity. The protein is Tribbles homolog 1 of Mus musculus (Mouse).